The following is a 283-amino-acid chain: MGIRSYQAYPPGTRDGSIVNSKEMVNSKEMIESEPQKVLVRGRHIARGRNHRGIITSRHRGGGHRRLYRMIDFRRDKRDVSGEIKTIEYDPNRNTCICLTNYGDGKKRYILYPHGIEIGNKIISGIEAPISIGNTSPLSTNMPLGASVHNIETRPGRGGQLVRAAGTTAKILAKEGQLVTLKLPSGEIRSLPQKCFATIGQIGNIDANNLKLGKAGSRRWLGKRPSVRGVVMNPIDHPHGGGEGKVPIGRKKPLTPWGHPALGRKSRKRRKYSDTLILRRRMA.

Positions 229 to 274 (GVVMNPIDHPHGGGEGKVPIGRKKPLTPWGHPALGRKSRKRRKYSD) are disordered. Positions 262–271 (LGRKSRKRRK) are enriched in basic residues.

Belongs to the universal ribosomal protein uL2 family. In terms of assembly, part of the 50S ribosomal subunit.

It localises to the plastid. The sequence is that of Large ribosomal subunit protein uL2c (rpl2) from Aneura mirabilis (Parasitic liverwort).